The chain runs to 138 residues: Small ribosomal subunit protein uS11c (138 aa).

Belongs to the universal ribosomal protein uS11 family. Part of the 30S ribosomal subunit.

Its subcellular location is the plastid. The protein resides in the chloroplast. The chain is Small ribosomal subunit protein uS11c from Phaseolus vulgaris (Kidney bean).